Consider the following 1454-residue polypeptide: Beta-1,3-glucan-binding protein (1454 aa).

A propeptide spanning residues 1-197 (MSFDLTTPFD…KRSLEMRMMN (197 aa)) is cleaved from the precursor. N-linked (GlcNAc...) asparagine glycosylation is found at Asn33, Asn55, Asn185, Asn571, Asn592, Asn825, Asn882, and Asn1153.

This sequence belongs to the glycosyl hydrolase 16 family. Monomer. In terms of tissue distribution, expressed in the hepatopancreas and secreted into the hemolymph. Expressed at lower levels in muscle, pleopod and gill tissue.

Its subcellular location is the secreted. Involved in the recognition of invading microorganisms. Binds specifically to beta-1,3-glucan and activates the prophenoloxidase cascade. This Penaeus vannamei (Whiteleg shrimp) protein is Beta-1,3-glucan-binding protein.